The primary structure comprises 155 residues: 6,7-dimethyl-8-ribityllumazine synthase (155 aa).

5-amino-6-(D-ribitylamino)uracil contacts are provided by residues Phe-22, Ala-57–Glu-59, and Ser-81–Ile-83. Gly-86–Thr-87 serves as a coordination point for (2S)-2-hydroxy-3-oxobutyl phosphate. His-88 (proton donor) is an active-site residue. Phe-113 lines the 5-amino-6-(D-ribitylamino)uracil pocket. (2S)-2-hydroxy-3-oxobutyl phosphate is bound at residue Arg-127.

Belongs to the DMRL synthase family. As to quaternary structure, forms an icosahedral capsid composed of 60 subunits, arranged as a dodecamer of pentamers.

The enzyme catalyses (2S)-2-hydroxy-3-oxobutyl phosphate + 5-amino-6-(D-ribitylamino)uracil = 6,7-dimethyl-8-(1-D-ribityl)lumazine + phosphate + 2 H2O + H(+). It functions in the pathway cofactor biosynthesis; riboflavin biosynthesis; riboflavin from 2-hydroxy-3-oxobutyl phosphate and 5-amino-6-(D-ribitylamino)uracil: step 1/2. Catalyzes the formation of 6,7-dimethyl-8-ribityllumazine by condensation of 5-amino-6-(D-ribitylamino)uracil with 3,4-dihydroxy-2-butanone 4-phosphate. This is the penultimate step in the biosynthesis of riboflavin. The chain is 6,7-dimethyl-8-ribityllumazine synthase from Photobacterium phosphoreum.